A 574-amino-acid chain; its full sequence is Sentrin-specific protease 3 (574 aa).

A disordered region spans residues 1–125; that stretch reads MKETIQGTGS…PTHRKTCSQR (125 aa). Phosphoserine occurs at positions 54, 73, and 75. The span at 74 to 93 shows a compositional bias: acidic residues; the sequence is ASEEEEEEEEEEDEDEEEEV. Basic residues predominate over residues 112-125; the sequence is RPSRPTHRKTCSQR. 2 short sequence motifs (nuclear localization signal) span residues 125-128 and 153-159; these read RRRR and RHRGRRR. The tract at residues 161–181 is disordered; the sequence is LAHPKNHLSPQQGGATPQVPS. S169 is modified (phosphoserine). T176 is modified (phosphothreonine). S181, S188, S212, and S232 each carry phosphoserine. Residues 386 to 543 form a protease region; the sequence is HVLTMDDLGT…AFVLQYCKHL (158 aa). Catalysis depends on residues H465 and D482. The active-site Nucleophile is C532.

This sequence belongs to the peptidase C48 family. Component of some MLL1/MLL complex, at least composed of the core components KMT2A/MLL1, ASH2L, HCFC1/HCF1, WDR5 and RBBP5, as well as the facultative components BACC1, CHD8, E2F6, HSP70, INO80C, KANSL1, LAS1L, MAX, MCRS1, MGA, MYST1/MOF, PELP1, PHF20, PRP31, RING2, RUVB1/TIP49A, RUVB2/TIP49B, SENP3, TAF1, TAF4, TAF6, TAF7, TAF9 and TEX10. Interacts with EP300, NPM1 and CDCA8. Component of the 5FMC complex, at least composed of PELP1, LAS1L, TEX10, WDR18 and SENP3; the complex interacts with methylated CHTOP and ZNF148. Interacts with NOL9. Interacts with CCAR2.

Its subcellular location is the nucleus. It is found in the nucleolus. The protein localises to the nucleoplasm. The protein resides in the cytoplasm. Its activity is regulated as follows. On oxidative stress, SENP3 degradation is blocked by inhibition of its ubiquitination, which stabilizes it as it accumulates in the nucleoplasm. In terms of biological role, protease that releases SUMO2 and SUMO3 monomers from sumoylated substrates, but has only weak activity against SUMO1 conjugates. Deconjugates SUMO2 from MEF2D, which increases its transcriptional activation capability. Deconjugates SUMO2 and SUMO3 from CDCA8. Redox sensor that, when redistributed into nucleoplasm, can act as an effector to enhance HIF1A transcriptional activity by desumoylating EP300. Required for rRNA processing through deconjugation of SUMO2 and SUMO3 from nucleophosmin, NPM1. Plays a role in the regulation of sumoylation status of ZNF148. Functions as a component of the Five Friends of Methylated CHTOP (5FMC) complex; the 5FMC complex is recruited to ZNF148 by methylated CHTOP, leading to desumoylation of ZNF148 and subsequent transactivation of ZNF148 target genes. Deconjugates SUMO2 from KAT5. Catalyzes desumoylation of MRE11. The protein is Sentrin-specific protease 3 of Homo sapiens (Human).